We begin with the raw amino-acid sequence, 361 residues long: Epoxyqueuosine reductase (361 aa).

Aspartate 147 (proton donor) is an active-site residue. Positions 193-222 constitute a 4Fe-4S ferredoxin-type domain; the sequence is VDPAMDSEHCGRCSACLDICPTAAFVGPYR. 8 residues coordinate [4Fe-4S] cluster: cysteine 202, cysteine 205, cysteine 208, cysteine 212, cysteine 228, cysteine 255, cysteine 258, and cysteine 262.

This sequence belongs to the QueG family. As to quaternary structure, monomer. Cob(II)alamin is required as a cofactor. Requires [4Fe-4S] cluster as cofactor.

The protein localises to the cytoplasm. The catalysed reaction is epoxyqueuosine(34) in tRNA + AH2 = queuosine(34) in tRNA + A + H2O. The protein operates within tRNA modification; tRNA-queuosine biosynthesis. Functionally, catalyzes the conversion of epoxyqueuosine (oQ) to queuosine (Q), which is a hypermodified base found in the wobble positions of tRNA(Asp), tRNA(Asn), tRNA(His) and tRNA(Tyr). The sequence is that of Epoxyqueuosine reductase from Pseudomonas aeruginosa (strain ATCC 15692 / DSM 22644 / CIP 104116 / JCM 14847 / LMG 12228 / 1C / PRS 101 / PAO1).